The following is a 226-amino-acid chain: Uracil-DNA glycosylase (226 aa).

Residue Asp-65 is the Proton acceptor of the active site.

Belongs to the uracil-DNA glycosylase (UDG) superfamily. UNG family.

It localises to the cytoplasm. It carries out the reaction Hydrolyzes single-stranded DNA or mismatched double-stranded DNA and polynucleotides, releasing free uracil.. Its function is as follows. Excises uracil residues from the DNA which can arise as a result of misincorporation of dUMP residues by DNA polymerase or due to deamination of cytosine. The chain is Uracil-DNA glycosylase from Enterococcus faecalis (strain ATCC 700802 / V583).